The chain runs to 410 residues: Peptidase T (410 aa).

Residue H79 participates in Zn(2+) binding. D81 is a catalytic residue. D142 lines the Zn(2+) pocket. The Proton acceptor role is filled by E176. The Zn(2+) site is built by E177, D199, and H381.

This sequence belongs to the peptidase M20B family. Requires Zn(2+) as cofactor.

It is found in the cytoplasm. It catalyses the reaction Release of the N-terminal residue from a tripeptide.. Cleaves the N-terminal amino acid of tripeptides. The sequence is that of Peptidase T (pepT) from Bacillus subtilis (strain 168).